The chain runs to 852 residues: Disks large homolog 2 (852 aa).

2 S-palmitoyl cysteine lipidation sites follow: C5 and C7. Residue S28 is modified to Phosphoserine. Residue Y58 is modified to Phosphotyrosine. S65 is modified (phosphoserine). PDZ domains follow at residues 98–185 (EITL…RRRR) and 193–280 (EIKL…GKPT). Residues S307, S328, S360, S365, S406, and S414 each carry the phosphoserine modification. The region spanning 421–502 (KVVLHKGSTG…TVTIIAQYQP (82 aa)) is the PDZ 3 domain. At Y505 the chain carries Phosphotyrosine. Residues S528, S530, and S553 each carry the phosphoserine modification. One can recognise an SH3 domain in the interval 536-606 (KRSLYVRAMF…PSKRRVERKE (71 aa)). The region spanning 662-837 (TRPVIILGPM…IYNQCKLVIE (176 aa)) is the Guanylate kinase-like domain. Y732 and Y737 each carry phosphotyrosine.

In terms of assembly, interacts with NOS1/nNOS through second PDZ domain. Interacts with KCNJ2/Kir2.1 (via C-terminus) through one of its PDZ domains. Interacts with KCNJ4. Interacts with FRMPD4 (via C-terminus). Interacts through its PDZ domains with NETO1. Interacts with LRFN1, LRFN2 and LRFN4. Interacts with FASLG. Interacts with KCNJ4. Interacts with ADAM22. Interacts with DGKI (via PDZ-binding motif). Palmitoylation of isoform 1 and isoform 2 is not required for targeting to postsynaptic density. Brain. Highest levels of isoform 1 in cortex, olfactory bulb, thalamus, hypothalamus, striatum and hippocampus. Highest level of isoform 2 in olfactory bulb. Reduced levels in cortex and hippocampus. Highest level of isoform 4 in spinal cord. Low levels of isoform 4, isoform 6, and isoform 7 in superior cervical ganglion.

The protein localises to the cell membrane. The protein resides in the postsynaptic density. It localises to the synapse. Its subcellular location is the membrane. It is found in the cell projection. The protein localises to the axon. The protein resides in the perikaryon. Its function is as follows. Required for perception of chronic pain through NMDA receptor signaling. Regulates surface expression of NMDA receptors in dorsal horn neurons of the spinal cord. Interacts with the cytoplasmic tail of NMDA receptor subunits as well as inward rectifying potassium channels. Involved in regulation of synaptic stability at cholinergic synapses. Part of the postsynaptic protein scaffold of excitatory synapses. The polypeptide is Disks large homolog 2 (Dlg2) (Mus musculus (Mouse)).